The primary structure comprises 336 residues: D-erythrose-4-phosphate dehydrogenase (336 aa).

11–12 (RI) provides a ligand contact to NAD(+). Substrate contacts are provided by residues 153–155 (SCT), arginine 199, 212–213 (TK), and arginine 235. The active-site Nucleophile is the cysteine 154. Asparagine 317 provides a ligand contact to NAD(+).

This sequence belongs to the glyceraldehyde-3-phosphate dehydrogenase family. Epd subfamily. As to quaternary structure, homotetramer.

It is found in the cytoplasm. It carries out the reaction D-erythrose 4-phosphate + NAD(+) + H2O = 4-phospho-D-erythronate + NADH + 2 H(+). It functions in the pathway cofactor biosynthesis; pyridoxine 5'-phosphate biosynthesis; pyridoxine 5'-phosphate from D-erythrose 4-phosphate: step 1/5. Its function is as follows. Catalyzes the NAD-dependent conversion of D-erythrose 4-phosphate to 4-phosphoerythronate. This chain is D-erythrose-4-phosphate dehydrogenase, found in Aeromonas salmonicida (strain A449).